A 297-amino-acid polypeptide reads, in one-letter code: Homoserine kinase (297 aa).

82–92 serves as a coordination point for ATP; it reads PLTRGLGSSAS.

Belongs to the GHMP kinase family. Homoserine kinase subfamily.

It localises to the cytoplasm. It catalyses the reaction L-homoserine + ATP = O-phospho-L-homoserine + ADP + H(+). The protein operates within amino-acid biosynthesis; L-threonine biosynthesis; L-threonine from L-aspartate: step 4/5. In terms of biological role, catalyzes the ATP-dependent phosphorylation of L-homoserine to L-homoserine phosphate. This Bacillus thuringiensis (strain Al Hakam) protein is Homoserine kinase.